We begin with the raw amino-acid sequence, 459 residues long: Methylenetetrahydrofolate--tRNA-(uracil-5-)-methyltransferase TrmFO (459 aa).

Position 15–20 (15–20) interacts with FAD; that stretch reads GAGLAG.

The protein belongs to the MnmG family. TrmFO subfamily. FAD serves as cofactor.

It is found in the cytoplasm. The enzyme catalyses uridine(54) in tRNA + (6R)-5,10-methylene-5,6,7,8-tetrahydrofolate + NADH + H(+) = 5-methyluridine(54) in tRNA + (6S)-5,6,7,8-tetrahydrofolate + NAD(+). It catalyses the reaction uridine(54) in tRNA + (6R)-5,10-methylene-5,6,7,8-tetrahydrofolate + NADPH + H(+) = 5-methyluridine(54) in tRNA + (6S)-5,6,7,8-tetrahydrofolate + NADP(+). Catalyzes the folate-dependent formation of 5-methyl-uridine at position 54 (M-5-U54) in all tRNAs. The protein is Methylenetetrahydrofolate--tRNA-(uracil-5-)-methyltransferase TrmFO of Syntrophotalea carbinolica (strain DSM 2380 / NBRC 103641 / GraBd1) (Pelobacter carbinolicus).